The sequence spans 517 residues: Apolipoprotein N-acyltransferase (517 aa).

Helical transmembrane passes span 5–25, 26–46, 55–75, 90–110, 128–148, 162–182, and 193–213; these read SFFSLGRLLLAVPAGAIATLT, FAPYNYWLLAPVSIALLLWLL, GLIGFLWGLGLFGTGISWVHV, FLMSSLISYLALYPAAFGALF, VIWLLLDWVRGWALTGFPWLW, APILGVEGITLALVLISGALV, and LMVPVLIMALTWAANTVSWVV. The CN hydrolase domain maps to 225-471; it reads IQGNVPQELK…TAVLRATITP (247 aa). The active-site Proton acceptor is glutamate 264. The active site involves lysine 330. Residue cysteine 382 is the Nucleophile of the active site.

Belongs to the CN hydrolase family. Apolipoprotein N-acyltransferase subfamily.

It localises to the cell inner membrane. The enzyme catalyses N-terminal S-1,2-diacyl-sn-glyceryl-L-cysteinyl-[lipoprotein] + a glycerophospholipid = N-acyl-S-1,2-diacyl-sn-glyceryl-L-cysteinyl-[lipoprotein] + a 2-acyl-sn-glycero-3-phospholipid + H(+). The protein operates within protein modification; lipoprotein biosynthesis (N-acyl transfer). In terms of biological role, catalyzes the phospholipid dependent N-acylation of the N-terminal cysteine of apolipoprotein, the last step in lipoprotein maturation. The chain is Apolipoprotein N-acyltransferase from Photobacterium profundum (strain SS9).